A 300-amino-acid polypeptide reads, in one-letter code: MKIAILSRDGTLYSCKRLREAAIQRGHLVEILDPLSCYMNINPAASSIHYKGRKLPHFDAVIPRIGTAITFYGTAALRQFEMLGSYPLNESVAIARARDKLRSMQLLARQGIDLPVTGIAHSPDDTSDLIDMVGGAPLVVKLVEGTQGIGVVLAETRQAAESVIDAFRGLNAYILVQEYIKEAQGCDIRCLVVGDEVVAAIERRAKEGDFRSNLHRGGAASVASITPQEREIAIKAARTMALDVAGVDILRANRGPLVMEVNASPGLEGIEKTTGIDIAGKMIRWIERHATTEYCLKTGG.

An ATP-grasp domain is found at 104 to 287 (MQLLARQGID…IAGKMIRWIE (184 aa)). Residues lysine 141, 178–179 (EY), aspartate 187, and 211–213 (RSN) contribute to the ATP site. Positions 248, 260, and 262 each coordinate Mg(2+). Mn(2+)-binding residues include aspartate 248, glutamate 260, and asparagine 262.

This sequence belongs to the RimK family. Mg(2+) is required as a cofactor. Requires Mn(2+) as cofactor.

An L-glutamate ligase that catalyzes the ATP-dependent post-translational addition of glutamate residues to the C-terminus of ribosomal protein bS6 (RpsF). Is also able to catalyze the synthesis of poly-alpha-glutamate in vitro, via ATP hydrolysis from unprotected glutamate as substrate. The number of glutamate residues added to either RpsF or to poly-alpha-glutamate changes with pH. This is Ribosomal protein bS6--L-glutamate ligase from Escherichia coli O139:H28 (strain E24377A / ETEC).